Here is a 74-residue protein sequence, read N- to C-terminus: Small ribosomal subunit protein eS28 (74 aa).

The protein belongs to the eukaryotic ribosomal protein eS28 family.

The chain is Small ribosomal subunit protein eS28 from Halobacterium salinarum (strain ATCC 29341 / DSM 671 / R1).